We begin with the raw amino-acid sequence, 185 residues long: Elongation factor P (185 aa).

It belongs to the elongation factor P family.

The protein localises to the cytoplasm. It participates in protein biosynthesis; polypeptide chain elongation. Its function is as follows. Involved in peptide bond synthesis. Stimulates efficient translation and peptide-bond synthesis on native or reconstituted 70S ribosomes in vitro. Probably functions indirectly by altering the affinity of the ribosome for aminoacyl-tRNA, thus increasing their reactivity as acceptors for peptidyl transferase. The chain is Elongation factor P from Halalkalibacterium halodurans (strain ATCC BAA-125 / DSM 18197 / FERM 7344 / JCM 9153 / C-125) (Bacillus halodurans).